The sequence spans 130 residues: MVRTSVLHDALNSINNAEKAGKRQVLIRPSSKVIIKFLQVMQKHGYIGEFEEVDDHRSGKIVVQLNGRMNKCGVISPRYNVRLAELEKWVVKLLPARQFGYVILTTSAGIMDHEEARRKHVSGKIIGFFY.

This sequence belongs to the universal ribosomal protein uS8 family. Component of the small ribosomal subunit (SSU). Mature N.crassa ribosomes consist of a small (40S) and a large (60S) subunit. The 40S small subunit contains 1 molecule of ribosomal RNA (18S rRNA) and at least 32 different proteins. The large 60S subunit contains 3 rRNA molecules (26S, 5.8S and 5S rRNA) and at least 42 different proteins.

It localises to the cytoplasm. Its function is as follows. Component of the ribosome, a large ribonucleoprotein complex responsible for the synthesis of proteins in the cell. The small ribosomal subunit (SSU) binds messenger RNAs (mRNAs) and translates the encoded message by selecting cognate aminoacyl-transfer RNA (tRNA) molecules. The large subunit (LSU) contains the ribosomal catalytic site termed the peptidyl transferase center (PTC), which catalyzes the formation of peptide bonds, thereby polymerizing the amino acids delivered by tRNAs into a polypeptide chain. The nascent polypeptides leave the ribosome through a tunnel in the LSU and interact with protein factors that function in enzymatic processing, targeting, and the membrane insertion of nascent chains at the exit of the ribosomal tunnel. The protein is Small ribosomal subunit protein uS8 (crp-27) of Neurospora crassa (strain ATCC 24698 / 74-OR23-1A / CBS 708.71 / DSM 1257 / FGSC 987).